Reading from the N-terminus, the 235-residue chain is Small ribosomal subunit protein eS4 (235 aa).

One can recognise an S4 RNA-binding domain in the interval 43-114 (IPLLLIVRDM…DPHRFLRLIE (72 aa)).

The protein belongs to the eukaryotic ribosomal protein eS4 family.

The polypeptide is Small ribosomal subunit protein eS4 (Korarchaeum cryptofilum (strain OPF8)).